Consider the following 440-residue polypeptide: Chromosome partition protein MukF (440 aa).

The interval 208–236 is leucine-zipper; that stretch reads LSETSGTLRELQDTLEAAGDKLQANLLRI.

This sequence belongs to the MukF family. Interacts, and probably forms a ternary complex, with MukE and MukB via its C-terminal region. The complex formation is stimulated by calcium or magnesium. It is required for an interaction between MukE and MukB.

The protein resides in the cytoplasm. Its subcellular location is the nucleoid. In terms of biological role, involved in chromosome condensation, segregation and cell cycle progression. May participate in facilitating chromosome segregation by condensation DNA from both sides of a centrally located replisome during cell division. Not required for mini-F plasmid partitioning. Probably acts via its interaction with MukB and MukE. Overexpression results in anucleate cells. It has a calcium binding activity. The polypeptide is Chromosome partition protein MukF (Salmonella arizonae (strain ATCC BAA-731 / CDC346-86 / RSK2980)).